The chain runs to 311 residues: tRNA-cytidine(32) 2-sulfurtransferase (311 aa).

The short motif at 47–52 (SGGKDS) is the PP-loop motif element. [4Fe-4S] cluster is bound by residues C122, C125, and C213.

Belongs to the TtcA family. As to quaternary structure, homodimer. Requires Mg(2+) as cofactor. [4Fe-4S] cluster serves as cofactor.

Its subcellular location is the cytoplasm. The catalysed reaction is cytidine(32) in tRNA + S-sulfanyl-L-cysteinyl-[cysteine desulfurase] + AH2 + ATP = 2-thiocytidine(32) in tRNA + L-cysteinyl-[cysteine desulfurase] + A + AMP + diphosphate + H(+). It participates in tRNA modification. In terms of biological role, catalyzes the ATP-dependent 2-thiolation of cytidine in position 32 of tRNA, to form 2-thiocytidine (s(2)C32). The sulfur atoms are provided by the cysteine/cysteine desulfurase (IscS) system. This chain is tRNA-cytidine(32) 2-sulfurtransferase, found in Salmonella paratyphi A (strain ATCC 9150 / SARB42).